A 206-amino-acid chain; its full sequence is Small ribosomal subunit protein uS4A (206 aa).

The 67-residue stretch at 98–164 folds into the S4 RNA-binding domain; it reads LRLDNVAYKL…EKFKTFAENP (67 aa).

It belongs to the universal ribosomal protein uS4 family. As to quaternary structure, part of the 30S ribosomal subunit. Contacts protein S5. The interaction surface between S4 and S5 is involved in control of translational fidelity.

In terms of biological role, one of the primary rRNA binding proteins, it binds directly to 16S rRNA where it nucleates assembly of the body of the 30S subunit. Its function is as follows. With S5 and S12 plays an important role in translational accuracy. This chain is Small ribosomal subunit protein uS4A (rspD1), found in Clostridium acetobutylicum (strain ATCC 824 / DSM 792 / JCM 1419 / IAM 19013 / LMG 5710 / NBRC 13948 / NRRL B-527 / VKM B-1787 / 2291 / W).